Here is a 243-residue protein sequence, read N- to C-terminus: Small ribosomal subunit protein uS2 (243 aa).

This sequence belongs to the universal ribosomal protein uS2 family.

This is Small ribosomal subunit protein uS2 from Chromobacterium violaceum (strain ATCC 12472 / DSM 30191 / JCM 1249 / CCUG 213 / NBRC 12614 / NCIMB 9131 / NCTC 9757 / MK).